The sequence spans 954 residues: Xylanolytic transcriptional activator xlnR (954 aa).

2 disordered regions span residues 1–39 and 51–93; these read MSTT…LAEG and REAA…SQRD. The span at 8 to 21 shows a compositional bias: low complexity; it reads HFPHSYSPFSSSRS. Residues 22 to 33 show a composition bias toward polar residues; the sequence is LNRMAQSQTSGL. The segment covering 64-78 has biased composition (basic and acidic residues); it reads GKPKDQFQVDNDNHH. A compositionally biased stretch (polar residues) spans 82 to 91; it reads SLSNFKNPSQ. Positions 119–145 form a DNA-binding region, zn(2)-C6 fungal-type; it reads CDQCNQLRTKCDGQNPCAHCIEFGLTC. Disordered stretches follow at residues 173–226, 312–332, 566–607, and 758–777; these read ATNS…HSEA, NPQE…STEN, ELPP…PGNT, and MDGS…STVE. Residues 174-183 show a composition bias toward polar residues; the sequence is TNSGQPNGSS. Positions 574–590 are enriched in basic and acidic residues; sequence ARPDAERDGDPDADLSK. A compositionally biased stretch (polar residues) spans 764–777; the sequence is NHVSPSGRSSSTVE.

This sequence belongs to the xlnR/xlr1 family.

The protein localises to the nucleus. Functionally, transcriptional activator of the xylanolytic system. Involved in the regulation of extracellular cellulolytic and xylanolytic genes and in the regulation of the intracellular activities of D-xylose catabolic genes in the pentose catabolic pathway (PCP) in response to the presence of D-xylose. This is Xylanolytic transcriptional activator xlnR (xlnR) from Aspergillus fumigatus (strain CBS 144.89 / FGSC A1163 / CEA10) (Neosartorya fumigata).